The sequence spans 137 residues: UPF0146 protein MJ0688 (137 aa).

It belongs to the UPF0146 family.

This chain is UPF0146 protein MJ0688, found in Methanocaldococcus jannaschii (strain ATCC 43067 / DSM 2661 / JAL-1 / JCM 10045 / NBRC 100440) (Methanococcus jannaschii).